A 33-amino-acid polypeptide reads, in one-letter code: Dermaseptin-H8 (33 aa).

Leu-33 is modified (leucine amide).

As to expression, expressed by the skin glands.

The protein localises to the secreted. Has antimicrobial activity. In Pithecopus hypochondrialis (Orange-legged leaf frog), this protein is Dermaseptin-H8.